The following is a 156-amino-acid chain: Snaclec 2 (156 aa).

A signal peptide spans 1–21; sequence MGRFIFLSSGLLVVFLSLSGA. 3 disulfides stabilise this stretch: cysteine 25–cysteine 36, cysteine 53–cysteine 150, and cysteine 125–cysteine 142. The region spanning 32–151 is the C-type lectin domain; sequence FDQHCYRAFD…CGDDYPFVCK (120 aa).

The protein belongs to the snaclec family. Heterodimer; disulfide-linked. Expressed by the venom gland.

Its subcellular location is the secreted. Its function is as follows. Interferes with one step of hemostasis (modulation of platelet aggregation, or coagulation cascade, for example). This is Snaclec 2 from Bitis gabonica (Gaboon adder).